The chain runs to 713 residues: Peroxisomal biogenesis factor 8 (713 aa).

Residues 1-31 (MYRLGSQGRSIQSQLQNGDSSSGRPLQLQGT) are disordered. Residues 7–30 (QGRSIQSQLQNGDSSSGRPLQLQG) show a composition bias toward polar residues. Residues 711–713 (AKL) carry the Microbody targeting signal motif.

In terms of assembly, interacts with PEX5 (via N-terminus).

Its subcellular location is the peroxisome membrane. Essential component of the machinery required for the import of both PTS1 and PTS2 (and perhaps all) peroxisomal matrix proteins. Binding of PEX8 to the N-terminus of PEX5 cargo receptor induces a conformational change of the TPR domains and decrease their binding affinity to cargo, facilitating the release of the PTS1 proteins within the peroxisome. The chain is Peroxisomal biogenesis factor 8 from Komagataella phaffii (strain GS115 / ATCC 20864) (Yeast).